A 256-amino-acid polypeptide reads, in one-letter code: Isoprenyl transferase (256 aa).

Asp33 is an active-site residue. Asp33 serves as a coordination point for Mg(2+). Substrate-binding positions include 34-37 (GNGR), Trp38, Arg46, His50, and 78-80 (STE). The Proton acceptor role is filled by Asn81. Residues Trp82, Arg84, Arg201, and 207 to 209 (RIS) contribute to the substrate site. Glu220 contacts Mg(2+).

It belongs to the UPP synthase family. Homodimer. Mg(2+) is required as a cofactor.

In terms of biological role, catalyzes the condensation of isopentenyl diphosphate (IPP) with allylic pyrophosphates generating different type of terpenoids. This Staphylococcus aureus (strain Mu50 / ATCC 700699) protein is Isoprenyl transferase.